The following is a 273-amino-acid chain: Proteasome subunit beta type-10 (273 aa).

M1 carries the N-acetylmethionine modification. Positions 1-39 (MLKQAVEPTGGFSFENCQRNASLEHVLPGLRVPHARKTG) are cleaved as a propeptide — removed in mature form. Residue T40 is the Nucleophile of the active site.

It belongs to the peptidase T1B family. The 26S proteasome consists of a 20S proteasome core and two 19S regulatory subunits. The 20S proteasome core is composed of 28 subunits that are arranged in four stacked rings, resulting in a barrel-shaped structure. The two end rings are each formed by seven alpha subunits, and the two central rings are each formed by seven beta subunits. The catalytic chamber with the active sites is on the inside of the barrel. Component of the immunoproteasome, where it displaces the equivalent housekeeping subunit PSMB7. Component of the spermatoproteasome, a form of the proteasome specifically found in testis. Autocleaved. The resulting N-terminal Thr residue of the mature subunit is responsible for the nucleophile proteolytic activity. As to expression, detected in liver (at protein level).

The protein resides in the cytoplasm. The protein localises to the nucleus. The enzyme catalyses Cleavage of peptide bonds with very broad specificity.. In terms of biological role, the proteasome is a multicatalytic proteinase complex which is characterized by its ability to cleave peptides with Arg, Phe, Tyr, Leu, and Glu adjacent to the leaving group at neutral or slightly basic pH. The proteasome has an ATP-dependent proteolytic activity. This subunit is involved in antigen processing to generate class I binding peptides. Plays a role in determining the T-cell repertoire for an antiviral T-cell response. In Mus musculus (Mouse), this protein is Proteasome subunit beta type-10 (Psmb10).